A 628-amino-acid chain; its full sequence is NUAK family SNF1-like kinase 2 (628 aa).

At Met1 the chain carries N-acetylmethionine. Positions 53 to 303 constitute a Protein kinase domain; that stretch reads YEFLETLGKG…LEDVASHWWV (251 aa). Residues 59 to 67 and Lys81 contribute to the ATP site; that span reads LGKGTYGKV. Residue Asp175 is the Proton acceptor of the active site. Position 208 is a phosphothreonine; by LKB1 (Thr208). The interval 355 to 493 is disordered; sequence KQHAPGGGST…KEQKPPQASG (139 aa). Ser435 carries the post-translational modification Phosphoserine. A compositionally biased stretch (low complexity) spans 457 to 469; sequence SGYYSSPEPSESG. Residues Ser523, Ser544, Ser547, and Ser573 each carry the phosphoserine modification. The segment at 531–562 is disordered; the sequence is RPLARASRPSGAVSEDSILSSESFDQLDLPER.

The protein belongs to the protein kinase superfamily. CAMK Ser/Thr protein kinase family. SNF1 subfamily. Mg(2+) serves as cofactor. Phosphorylated at Thr-208 by STK11/LKB1 in complex with STE20-related adapter-alpha (STRADA) pseudo kinase and CAB39. Autophosphorylation is also possible at Thr-208.

It catalyses the reaction L-seryl-[protein] + ATP = O-phospho-L-seryl-[protein] + ADP + H(+). The catalysed reaction is L-threonyl-[protein] + ATP = O-phospho-L-threonyl-[protein] + ADP + H(+). With respect to regulation, activated by phosphorylation on Thr-208. Stress-activated kinase involved in tolerance to glucose starvation. Induces cell-cell detachment by increasing F-actin conversion to G-actin. Expression is induced by CD95 or TNF-alpha, via NF-kappa-B. Protects cells from CD95-mediated apoptosis and is required for the increased motility and invasiveness of CD95-activated tumor cells. Phosphorylates LATS1 and LATS2. Plays a key role in neural tube closure during embryonic development through LATS2 phosphorylation and regulation of the nuclear localization of YAP1 a critical downstream regulatory target in the Hippo signaling pathway. In Homo sapiens (Human), this protein is NUAK family SNF1-like kinase 2.